Here is a 374-residue protein sequence, read N- to C-terminus: Chaperone protein DnaJ (374 aa).

Residues 5–70 (DYYEVLGVER…NKRAAYDQYG (66 aa)) enclose the J domain. Residues 133 to 211 (GTSVNIRVPT…CHGEGRVEEY (79 aa)) form a CR-type zinc finger. The Zn(2+) site is built by Cys-146, Cys-149, Cys-163, Cys-166, Cys-185, Cys-188, Cys-199, and Cys-202. CXXCXGXG motif repeat units follow at residues 146-153 (CKPCDGSG), 163-170 (CPTCGGIG), 185-192 (CPRCHGQG), and 199-206 (CDSCHGEG).

The protein belongs to the DnaJ family. Homodimer. The cofactor is Zn(2+).

Its subcellular location is the cytoplasm. Its function is as follows. Participates actively in the response to hyperosmotic and heat shock by preventing the aggregation of stress-denatured proteins and by disaggregating proteins, also in an autonomous, DnaK-independent fashion. Unfolded proteins bind initially to DnaJ; upon interaction with the DnaJ-bound protein, DnaK hydrolyzes its bound ATP, resulting in the formation of a stable complex. GrpE releases ADP from DnaK; ATP binding to DnaK triggers the release of the substrate protein, thus completing the reaction cycle. Several rounds of ATP-dependent interactions between DnaJ, DnaK and GrpE are required for fully efficient folding. Also involved, together with DnaK and GrpE, in the DNA replication of plasmids through activation of initiation proteins. This Pseudomonas fluorescens (strain SBW25) protein is Chaperone protein DnaJ.